The primary structure comprises 356 residues: PEP-dependent dihydroxyacetone kinase, dihydroxyacetone-binding subunit DhaK (356 aa).

The DhaK domain maps to 7–352 (DVQDVLDEQL…WDAPVHTPAL (346 aa)). Dihydroxyacetone contacts are provided by residues 53–56 (GSGH), Lys104, and Asp109. His56 functions as the Proton acceptor in the catalytic mechanism. The active-site Tele-hemiaminal-histidine intermediate is the His218.

Homodimer. The dihydroxyacetone kinase complex is composed of a homodimer of DhaM, a homodimer of DhaK and the subunit DhaL. DhaL also forms a complex with DhaR.

It carries out the reaction dihydroxyacetone + phosphoenolpyruvate = dihydroxyacetone phosphate + pyruvate. It functions in the pathway polyol metabolism; glycerol degradation. With respect to regulation, inhibited by chloro-3-hydroxyacetone and D,L-glyceraldehyde. Functionally, dihydroxyacetone binding subunit of the dihydroxyacetone kinase, which is responsible for the phosphoenolpyruvate (PEP)-dependent phosphorylation of dihydroxyacetone via a phosphoryl group transfer from DhaL-ATP. Binds covalently dihydroxyacetone in hemiaminal linkage. DhaK also acts as corepressor of the transcription activator DhaR by binding to the sensor domain of DhaR. In the presence of dihydroxyacetone, DhaL-ADP displaces DhaK and stimulates DhaR activity. In the absence of dihydroxyacetone, DhaL-ADP is converted by the PTS to DhaL-ATP, which does not bind to DhaR. The protein is PEP-dependent dihydroxyacetone kinase, dihydroxyacetone-binding subunit DhaK of Escherichia coli (strain K12).